The chain runs to 160 residues: 2-C-methyl-D-erythritol 2,4-cyclodiphosphate synthase (160 aa).

Residues aspartate 11 and histidine 13 each coordinate a divalent metal cation. 4-CDP-2-C-methyl-D-erythritol 2-phosphate contacts are provided by residues 11 to 13 and 37 to 38; these read DVH and HS. Histidine 45 is an a divalent metal cation binding site. 4-CDP-2-C-methyl-D-erythritol 2-phosphate contacts are provided by residues 59–61, 64–68, 103–109, 135–138, phenylalanine 142, and arginine 145; these read DIG, FPDTD, AQAPKMA, and TTTE.

This sequence belongs to the IspF family. In terms of assembly, homotrimer. The cofactor is a divalent metal cation.

The catalysed reaction is 4-CDP-2-C-methyl-D-erythritol 2-phosphate = 2-C-methyl-D-erythritol 2,4-cyclic diphosphate + CMP. It functions in the pathway isoprenoid biosynthesis; isopentenyl diphosphate biosynthesis via DXP pathway; isopentenyl diphosphate from 1-deoxy-D-xylulose 5-phosphate: step 4/6. In terms of biological role, involved in the biosynthesis of isopentenyl diphosphate (IPP) and dimethylallyl diphosphate (DMAPP), two major building blocks of isoprenoid compounds. Catalyzes the conversion of 4-diphosphocytidyl-2-C-methyl-D-erythritol 2-phosphate (CDP-ME2P) to 2-C-methyl-D-erythritol 2,4-cyclodiphosphate (ME-CPP) with a corresponding release of cytidine 5-monophosphate (CMP). The polypeptide is 2-C-methyl-D-erythritol 2,4-cyclodiphosphate synthase (Thioalkalivibrio sulfidiphilus (strain HL-EbGR7)).